The following is a 969-amino-acid chain: UvrABC system protein A (969 aa).

32 to 39 (GLSGSGKS) provides a ligand contact to ATP. The C4-type zinc-finger motif lies at 258–286 (CPNGHPLAVDDLEPRSFSFNSPYGACPEC). 2 ABC transporter domains span residues 316-599 (WSAG…KDSI) and 619-948 (VDRK…KFLA). Residue 652–659 (GVSGSGKS) coordinates ATP. The C4-type zinc finger occupies 751-777 (CEACTGDGTIKIEMNFLPDVYVPCEVC).

It belongs to the ABC transporter superfamily. UvrA family. As to quaternary structure, forms a heterotetramer with UvrB during the search for lesions.

Its subcellular location is the cytoplasm. The UvrABC repair system catalyzes the recognition and processing of DNA lesions. UvrA is an ATPase and a DNA-binding protein. A damage recognition complex composed of 2 UvrA and 2 UvrB subunits scans DNA for abnormalities. When the presence of a lesion has been verified by UvrB, the UvrA molecules dissociate. The sequence is that of UvrABC system protein A from Mycobacterium leprae (strain TN).